The chain runs to 140 residues: Transcription antitermination protein NusB (140 aa).

The protein belongs to the NusB family.

In terms of biological role, involved in transcription antitermination. Required for transcription of ribosomal RNA (rRNA) genes. Binds specifically to the boxA antiterminator sequence of the ribosomal RNA (rrn) operons. The polypeptide is Transcription antitermination protein NusB (Streptococcus pneumoniae serotype 2 (strain D39 / NCTC 7466)).